We begin with the raw amino-acid sequence, 817 residues long: Protein kintoun (817 aa).

Disordered stretches follow at residues 233–259, 385–404, 410–445, and 473–503; these read AEST…PRCS, AGAR…RKSC, AGTA…TPEN, and VQTS…KPLC. Positions 386 to 401 are enriched in basic and acidic residues; that stretch reads GAREESADSSGADHGR. Phosphoserine is present on residues Ser-622 and Ser-631. The tract at residues 653–692 is disordered; that stretch reads ECSDPDGLQGKEKGVKEECPLSEKENTEHSTTSTADSNSS. Over residues 661–680 the composition is skewed to basic and acidic residues; sequence QGKEKGVKEECPLSEKENTE. The segment covering 681–692 has biased composition (polar residues); sequence HSTTSTADSNSS.

The protein belongs to the PIH1 family. Kintoun subfamily. As to quaternary structure, interacts with CFAP300. Interacts with DNAI2 and HSPA1A. Interacts with DNAAF4. Interacts with DNAAF6/PIH1D3.

It localises to the cytoplasm. The protein localises to the dynein axonemal particle. Functionally, required for cytoplasmic pre-assembly of axonemal dyneins, thereby playing a central role in motility in cilia and flagella. Involved in pre-assembly of dynein arm complexes in the cytoplasm before intraflagellar transport loads them for the ciliary compartment. The polypeptide is Protein kintoun (Rattus norvegicus (Rat)).